The primary structure comprises 262 residues: 3-methyl-2-oxobutanoate hydroxymethyltransferase (262 aa).

Positions 42 and 81 each coordinate Mg(2+). 3-methyl-2-oxobutanoate is bound by residues 42 to 43 (DS), aspartate 81, and lysine 110. Glutamate 112 is a binding site for Mg(2+). The active-site Proton acceptor is the glutamate 180.

Belongs to the PanB family. As to quaternary structure, homodecamer; pentamer of dimers. Requires Mg(2+) as cofactor.

It localises to the cytoplasm. It catalyses the reaction 3-methyl-2-oxobutanoate + (6R)-5,10-methylene-5,6,7,8-tetrahydrofolate + H2O = 2-dehydropantoate + (6S)-5,6,7,8-tetrahydrofolate. It participates in cofactor biosynthesis; (R)-pantothenate biosynthesis; (R)-pantoate from 3-methyl-2-oxobutanoate: step 1/2. Functionally, catalyzes the reversible reaction in which hydroxymethyl group from 5,10-methylenetetrahydrofolate is transferred onto alpha-ketoisovalerate to form ketopantoate. This is 3-methyl-2-oxobutanoate hydroxymethyltransferase from Legionella pneumophila (strain Lens).